The following is a 198-amino-acid chain: Imidazoleglycerol-phosphate dehydratase (198 aa).

The protein belongs to the imidazoleglycerol-phosphate dehydratase family.

It is found in the cytoplasm. It catalyses the reaction D-erythro-1-(imidazol-4-yl)glycerol 3-phosphate = 3-(imidazol-4-yl)-2-oxopropyl phosphate + H2O. Its pathway is amino-acid biosynthesis; L-histidine biosynthesis; L-histidine from 5-phospho-alpha-D-ribose 1-diphosphate: step 6/9. This Magnetococcus marinus (strain ATCC BAA-1437 / JCM 17883 / MC-1) protein is Imidazoleglycerol-phosphate dehydratase.